The sequence spans 99 residues: Putative protein tag-209 (99 aa).

The signal sequence occupies residues 1–16 (MLKLLAFVALLSVSVS).

The sequence is that of Putative protein tag-209 (tag-209) from Caenorhabditis elegans.